Here is a 294-residue protein sequence, read N- to C-terminus: Putative immediate early glycoprotein (294 aa).

Residues 1-21 (MKKLTMESLLVYTFVMGVCFT) form the signal peptide. The chain crosses the membrane as a helical span at residues 262 to 282 (LFFLAGGAFTMLLLLCCLSMI).

It belongs to the herpesviridae immediate early glycoprotein family.

The protein localises to the host membrane. The polypeptide is Putative immediate early glycoprotein (U18) (Homo sapiens (Human)).